We begin with the raw amino-acid sequence, 520 residues long: Peptide chain release factor 3 (520 aa).

Positions 8–273 constitute a tr-type G domain; it reads ESRKTFAIIS…AYVDHAPMPN (266 aa). GTP contacts are provided by residues 17–24, 85–89, and 139–142; these read SHPDAGKT, DTPGH, and NKLD.

The protein belongs to the TRAFAC class translation factor GTPase superfamily. Classic translation factor GTPase family. PrfC subfamily.

The protein resides in the cytoplasm. Increases the formation of ribosomal termination complexes and stimulates activities of RF-1 and RF-2. It binds guanine nucleotides and has strong preference for UGA stop codons. It may interact directly with the ribosome. The stimulation of RF-1 and RF-2 is significantly reduced by GTP and GDP, but not by GMP. In Staphylococcus carnosus (strain TM300), this protein is Peptide chain release factor 3.